The sequence spans 94 residues: Protein translocase subunit SecE (94 aa).

The interval 1 to 32 (MTDAVGSIDTPDAQDEVPESKKTRKGGKRAKK) is disordered. The segment covering 22-32 (KTRKGGKRAKK) has biased composition (basic residues). The chain crosses the membrane as a helical span at residues 59–81 (QLTSYTTVVIFFVAIMIRLVTVI).

This sequence belongs to the SecE/SEC61-gamma family. In terms of assembly, component of the Sec protein translocase complex. Heterotrimer consisting of SecY, SecE and SecG subunits. The heterotrimers can form oligomers, although 1 heterotrimer is thought to be able to translocate proteins. Interacts with the ribosome. Interacts with SecDF, and other proteins may be involved. Interacts with SecA.

It localises to the cell membrane. In terms of biological role, essential subunit of the Sec protein translocation channel SecYEG. Clamps together the 2 halves of SecY. May contact the channel plug during translocation. The polypeptide is Protein translocase subunit SecE (Streptomyces galbus).